The following is a 333-amino-acid chain: Glycerol-3-phosphate dehydrogenase [NAD(P)+] (333 aa).

Residues Ser10, Trp11, His31, Arg32, and Lys105 each contribute to the NADPH site. Sn-glycerol 3-phosphate contacts are provided by Lys105, Gly136, and Ser138. Ala140 is an NADPH binding site. 5 residues coordinate sn-glycerol 3-phosphate: Lys191, Asp244, Ser254, Arg255, and Asn256. Catalysis depends on Lys191, which acts as the Proton acceptor. Residue Arg255 coordinates NADPH. The NADPH site is built by Ile279 and Glu281.

The protein belongs to the NAD-dependent glycerol-3-phosphate dehydrogenase family.

Its subcellular location is the cytoplasm. It carries out the reaction sn-glycerol 3-phosphate + NAD(+) = dihydroxyacetone phosphate + NADH + H(+). The catalysed reaction is sn-glycerol 3-phosphate + NADP(+) = dihydroxyacetone phosphate + NADPH + H(+). It participates in membrane lipid metabolism; glycerophospholipid metabolism. Its function is as follows. Catalyzes the reduction of the glycolytic intermediate dihydroxyacetone phosphate (DHAP) to sn-glycerol 3-phosphate (G3P), the key precursor for phospholipid synthesis. The sequence is that of Glycerol-3-phosphate dehydrogenase [NAD(P)+] from Pelodictyon phaeoclathratiforme (strain DSM 5477 / BU-1).